The chain runs to 121 residues: Large ribosomal subunit protein uL18 (121 aa).

It belongs to the universal ribosomal protein uL18 family. As to quaternary structure, part of the 50S ribosomal subunit; part of the 5S rRNA/L5/L18/L25 subcomplex. Contacts the 5S and 23S rRNAs.

Its function is as follows. This is one of the proteins that bind and probably mediate the attachment of the 5S RNA into the large ribosomal subunit, where it forms part of the central protuberance. The polypeptide is Large ribosomal subunit protein uL18 (Ureaplasma urealyticum serovar 10 (strain ATCC 33699 / Western)).